A 196-amino-acid chain; its full sequence is Proteasome subunit beta 2 (196 aa).

Residues 1–6 (MEELPS) constitute a propeptide, removed in mature form; by autocatalysis. Thr-7 acts as the Nucleophile in catalysis.

This sequence belongs to the peptidase T1B family. As to quaternary structure, the 20S proteasome core is composed of 14 alpha and 14 beta subunits that assemble into four stacked heptameric rings, resulting in a barrel-shaped structure. The two inner rings, each composed of seven catalytic beta subunits, are sandwiched by two outer rings, each composed of seven alpha subunits. The catalytic chamber with the active sites is on the inside of the barrel. Has a gated structure, the ends of the cylinder being occluded by the N-termini of the alpha-subunits. Is capped at one or both ends by the proteasome regulatory ATPase, PAN.

It localises to the cytoplasm. The enzyme catalyses Cleavage of peptide bonds with very broad specificity.. With respect to regulation, the formation of the proteasomal ATPase PAN-20S proteasome complex, via the docking of the C-termini of PAN into the intersubunit pockets in the alpha-rings, triggers opening of the gate for substrate entry. Interconversion between the open-gate and close-gate conformations leads to a dynamic regulation of the 20S proteasome proteolysis activity. Component of the proteasome core, a large protease complex with broad specificity involved in protein degradation. The polypeptide is Proteasome subunit beta 2 (Metallosphaera sedula (strain ATCC 51363 / DSM 5348 / JCM 9185 / NBRC 15509 / TH2)).